The sequence spans 282 residues: Type 1 encapsulin shell protein (282 aa).

Belongs to the encapsulin family. Family 1 subfamily. As to quaternary structure, initially thought to form a 180 subunit shell. Forms hollow shells composed of 240 subunits, making a shell about 42-43 nm in diameter. The monomer is capable of assuming 4 different conformations which allows packaging into the icosahedron. The shell has 12 pentameric and 30 hexameric capsomers which form the vertices and faces of the icosahedral nanocompartment.

The protein resides in the encapsulin nanocompartment. In terms of biological role, shell component of a type 1 encapsulin nanocompartment. Assembles into proteinaceous icosahedral shells 42-43 nm in diameter with an iron- and phosphorus-rich core (1Fe:1.1P) which can store over 23,000-35,000 iron atoms (with a calculated maximum of 83,000 Fe). There are 2 types of negatively charged open pores in the cryo-electron structure; a 3-fold pore where 3 hexamers meet with a minimal size of 7.2 Angstroms and a 5-fold pore where pentamers meet with a minimal size of 2.3 Angstroms. The 2-fold pore seen in other encapsulin nanocompartments is closed. Empty compartments can be generated in E.coli. Both types of pore have extra density in their centers in the structure. 2 different cargo proteins have been identified (IMEF and Fer); when both are expressed in E.coli with the shell protein only IMEF is detected within the nanocompartment. E.coli expressing all 3 genes stores the largest amount of iron and is protected from Fe/H2O2-induced oxidative stress. Part of the iron-mineralizing encapsulin-associated Firmicute (IMEF) system. This is Type 1 encapsulin shell protein from Bacillus thermotolerans (Quasibacillus thermotolerans).